Reading from the N-terminus, the 378-residue chain is Opsin Rh4 (378 aa).

Over methionine 1–methionine 53 the chain is Extracellular. N-linked (GlcNAc...) asparagine glycosylation occurs at asparagine 6. Residues histidine 54–isoleucine 78 traverse the membrane as a helical segment. Topologically, residues phenylalanine 79 to asparagine 90 are cytoplasmic. A helical membrane pass occupies residues methionine 91–isoleucine 111. The Extracellular segment spans residues tyrosine 112–glutamine 127. Cysteines 126 and 203 form a disulfide. The helical transmembrane segment at isoleucine 128–glycine 148 threads the bilayer. The Cytoplasmic segment spans residues tyrosine 149 to lysine 167. The chain crosses the membrane as a helical span at residues alanine 168–aspartate 192. The Extracellular segment spans residues arginine 193–leucine 216. The helical transmembrane segment at phenylalanine 217–valine 244 threads the bilayer. The Cytoplasmic segment spans residues phenylalanine 245 to lysine 280. The chain crosses the membrane as a helical span at residues alanine 281–alanine 304. At phenylalanine 305–threonine 312 the chain is on the extracellular side. The chain crosses the membrane as a helical span at residues proline 313–serine 337. Position 324 is an N6-(retinylidene)lysine (lysine 324). Topologically, residues histidine 338–alanine 378 are cytoplasmic.

The protein belongs to the G-protein coupled receptor 1 family. Opsin subfamily. Phosphorylated on some or all of the serine and threonine residues present in the C-terminal region.

It is found in the membrane. Visual pigments are the light-absorbing molecules that mediate vision. They consist of an apoprotein, opsin, covalently linked to cis-retinal. The polypeptide is Opsin Rh4 (Rh4) (Drosophila melanogaster (Fruit fly)).